A 280-amino-acid polypeptide reads, in one-letter code: MKRIYVISDATGETAERVIRAALSQFYYDEVRVVRLCQIHNENDVQQAMSVAIAEPGMIAYTLVDPSLSQKVAQLAEDHGMYAVDLLGGLIYSLSCFLGATSQAKPGLLHRIDTDYFKRMEAVNFTVTHDDGQDTQYLHKADLVLVGASRSSKTPLSMYLAHKGYKVANVPLIIGIDPPVELFQIEQEKVVGLVIDPKRLVEIRTSRLINMRQSPRGNYADYQRVEDEITSCRRLYRQHPQWMVIDMTNKSVEEAASEILRKMAVREKRITEARVKGDIS.

147–154 contributes to the ADP binding site; that stretch reads GASRSSKT.

The protein belongs to the pyruvate, phosphate/water dikinase regulatory protein family. PDRP subfamily.

It carries out the reaction N(tele)-phospho-L-histidyl/L-threonyl-[pyruvate, phosphate dikinase] + ADP = N(tele)-phospho-L-histidyl/O-phospho-L-threonyl-[pyruvate, phosphate dikinase] + AMP + H(+). It catalyses the reaction N(tele)-phospho-L-histidyl/O-phospho-L-threonyl-[pyruvate, phosphate dikinase] + phosphate + H(+) = N(tele)-phospho-L-histidyl/L-threonyl-[pyruvate, phosphate dikinase] + diphosphate. Bifunctional serine/threonine kinase and phosphorylase involved in the regulation of the pyruvate, phosphate dikinase (PPDK) by catalyzing its phosphorylation/dephosphorylation. The polypeptide is Putative pyruvate, phosphate dikinase regulatory protein (Pelobacter propionicus (strain DSM 2379 / NBRC 103807 / OttBd1)).